The following is a 197-amino-acid chain: Pyridoxal 5'-phosphate synthase subunit PdxT (197 aa).

53 to 55 (GES) provides a ligand contact to L-glutamine. Cys-85 serves as the catalytic Nucleophile. L-glutamine-binding positions include Arg-114 and 142–143 (IR). Active-site charge relay system residues include His-179 and Glu-181.

The protein belongs to the glutaminase PdxT/SNO family. As to quaternary structure, in the presence of PdxS, forms a dodecamer of heterodimers. Only shows activity in the heterodimer.

The catalysed reaction is aldehydo-D-ribose 5-phosphate + D-glyceraldehyde 3-phosphate + L-glutamine = pyridoxal 5'-phosphate + L-glutamate + phosphate + 3 H2O + H(+). The enzyme catalyses L-glutamine + H2O = L-glutamate + NH4(+). Its pathway is cofactor biosynthesis; pyridoxal 5'-phosphate biosynthesis. Its function is as follows. Catalyzes the hydrolysis of glutamine to glutamate and ammonia as part of the biosynthesis of pyridoxal 5'-phosphate. The resulting ammonia molecule is channeled to the active site of PdxS. In Pyrococcus furiosus (strain ATCC 43587 / DSM 3638 / JCM 8422 / Vc1), this protein is Pyridoxal 5'-phosphate synthase subunit PdxT.